The following is a 469-amino-acid chain: Ribulose bisphosphate carboxylase large chain (469 aa).

Position 7 is an N6,N6,N6-trimethyllysine (lysine 7). The substrate site is built by asparagine 116 and threonine 166. Lysine 168 acts as the Proton acceptor in catalysis. Position 170 (lysine 170) interacts with substrate. The Mg(2+) site is built by lysine 194, aspartate 196, and glutamate 197. The residue at position 194 (lysine 194) is an N6-carboxylysine. Histidine 287 functions as the Proton acceptor in the catalytic mechanism. Residues arginine 288, histidine 320, and serine 372 each coordinate substrate.

Belongs to the RuBisCO large chain family. Type I subfamily. In terms of assembly, heterohexadecamer of 8 large chains and 8 small chains; disulfide-linked. The disulfide link is formed within the large subunit homodimers. Requires Mg(2+) as cofactor. The disulfide bond which can form in the large chain dimeric partners within the hexadecamer appears to be associated with oxidative stress and protein turnover.

The protein localises to the plastid. The protein resides in the chloroplast. It catalyses the reaction 2 (2R)-3-phosphoglycerate + 2 H(+) = D-ribulose 1,5-bisphosphate + CO2 + H2O. The catalysed reaction is D-ribulose 1,5-bisphosphate + O2 = 2-phosphoglycolate + (2R)-3-phosphoglycerate + 2 H(+). Functionally, ruBisCO catalyzes two reactions: the carboxylation of D-ribulose 1,5-bisphosphate, the primary event in carbon dioxide fixation, as well as the oxidative fragmentation of the pentose substrate in the photorespiration process. Both reactions occur simultaneously and in competition at the same active site. This is Ribulose bisphosphate carboxylase large chain from Pachira aquatica (Guiana chestnut).